The following is a 360-amino-acid chain: Insulin gene enhancer protein ISL-2 (360 aa).

2 consecutive LIM zinc-binding domains span residues 25–86 (AMCV…RLFG) and 87–149 (IKCA…LLER). The tract at residues 151–177 (AAGSPRSPGPLPGTPPGLHLPDAGSGQ) is disordered. 2 positions are modified to phosphoserine: serine 154 and serine 157. The homeobox DNA-binding region spans 192–251 (TTRVRTVLNEKQLHTLRTCYAANPRPDALMKEQLVEMTGLSPRVIRVWFQNKRCKDKKKS). The tract at residues 273-302 (GTLLVAGSPSAHENAVQGSAVEVQTYQPPW) is LIM-binding domain (LID). Serine 280 is modified (phosphoserine). The span at 328-337 (SGSLGNSSGS) shows a compositional bias: low complexity. The segment at 328 to 360 (SGSLGNSSGSDVTSLSSQLPDTPNSMVPSPVET) is disordered. The span at 338–360 (DVTSLSSQLPDTPNSMVPSPVET) shows a compositional bias: polar residues.

Interacts with LHX4.

Its subcellular location is the nucleus. Functionally, transcriptional factor that defines subclasses of motoneurons that segregate into columns in the spinal cord and select distinct axon pathways. This Rattus norvegicus (Rat) protein is Insulin gene enhancer protein ISL-2 (Isl2).